Here is a 115-residue protein sequence, read N- to C-terminus: NADH-ubiquinone oxidoreductase chain 3 (115 aa).

3 helical membrane passes run Leu-4–Leu-24, Phe-55–Leu-75, and Met-87–Leu-107.

This sequence belongs to the complex I subunit 3 family. Core subunit of respiratory chain NADH dehydrogenase (Complex I) which is composed of 45 different subunits. Interacts with TMEM186. Interacts with TMEM242.

Its subcellular location is the mitochondrion inner membrane. It carries out the reaction a ubiquinone + NADH + 5 H(+)(in) = a ubiquinol + NAD(+) + 4 H(+)(out). Functionally, core subunit of the mitochondrial membrane respiratory chain NADH dehydrogenase (Complex I) which catalyzes electron transfer from NADH through the respiratory chain, using ubiquinone as an electron acceptor. Essential for the catalytic activity of complex I. The sequence is that of NADH-ubiquinone oxidoreductase chain 3 from Peromyscus eremicus (Cactus mouse).